A 150-amino-acid polypeptide reads, in one-letter code: Large ribosomal subunit protein bL9 (150 aa).

It belongs to the bacterial ribosomal protein bL9 family.

Its function is as follows. Binds to the 23S rRNA. This is Large ribosomal subunit protein bL9 from Streptococcus equi subsp. zooepidemicus (strain MGCS10565).